The following is a 436-amino-acid chain: MDALYSHFSQVLEQQRKANTRLVVAFSGGVDSRVLLELAHRYAQEHLLPCCAVHVHHGLSHNADQWVQSCAAWCQEKNIPLTVERVQLDLTQGNSIEEEARNARYQALRAHINADDLLLTGQHADDQVETFLLALKRGSGPKGLSSMAQQMPFSQGRLIRPLLDVRRQEIERCAHAIGLNWVEDESNQDTRYDRNFLRQQILPALSERWPSFAASVQRSATLCAEQEALLDELLLPVFEQLFGEDQSLAITLLSQQSELARFKLFRMWLAKLGHPMPTRHQLSLIWQQVALSQADANPILQLSQGQVRRFNQRLYLVADNQDLSAWHAPITLNTPLALPDGLGTIELTLSRGFGQIALPEQSEALWISFNPEGLSAHPAERGHSRKLKKLFQEYQVPSWLRRRTPILMYHQQVVAVAGLFVDRQFIGQDCELFWRK.

27-32 (SGGVDS) is a binding site for ATP.

It belongs to the tRNA(Ile)-lysidine synthase family.

It is found in the cytoplasm. The enzyme catalyses cytidine(34) in tRNA(Ile2) + L-lysine + ATP = lysidine(34) in tRNA(Ile2) + AMP + diphosphate + H(+). Ligates lysine onto the cytidine present at position 34 of the AUA codon-specific tRNA(Ile) that contains the anticodon CAU, in an ATP-dependent manner. Cytidine is converted to lysidine, thus changing the amino acid specificity of the tRNA from methionine to isoleucine. This Vibrio vulnificus (strain YJ016) protein is tRNA(Ile)-lysidine synthase.